The chain runs to 408 residues: 4-hydroxy-3-methylbut-2-en-1-yl diphosphate synthase (ferredoxin) (408 aa).

Residues 1-21 are compositionally biased toward polar residues; sequence MQTLPTPTTSSNTANQSTFDT. The tract at residues 1–26 is disordered; the sequence is MQTLPTPTTSSNTANQSTFDTTIKRR. The [4Fe-4S] cluster site is built by Cys317, Cys320, Cys351, and Glu358.

This sequence belongs to the IspG family. [4Fe-4S] cluster is required as a cofactor.

It catalyses the reaction (2E)-4-hydroxy-3-methylbut-2-enyl diphosphate + 2 oxidized [2Fe-2S]-[ferredoxin] + H2O = 2-C-methyl-D-erythritol 2,4-cyclic diphosphate + 2 reduced [2Fe-2S]-[ferredoxin] + H(+). It functions in the pathway isoprenoid biosynthesis; isopentenyl diphosphate biosynthesis via DXP pathway; isopentenyl diphosphate from 1-deoxy-D-xylulose 5-phosphate: step 5/6. Converts 2C-methyl-D-erythritol 2,4-cyclodiphosphate (ME-2,4cPP) into 1-hydroxy-2-methyl-2-(E)-butenyl 4-diphosphate. The protein is 4-hydroxy-3-methylbut-2-en-1-yl diphosphate synthase (ferredoxin) of Trichormus variabilis (strain ATCC 29413 / PCC 7937) (Anabaena variabilis).